Reading from the N-terminus, the 33-residue chain is Rhinophrynin-33 (33 aa).

Expressed by the skin glands.

The protein resides in the secreted. Its function is as follows. Non-cytotoxic peptide with immunosuppressive and insulinotropic effects. Induces an increased production of the anti-inflammatory cytokine IL-10 and inhibits production of the pro-inflammatory cytokines TNF-alpha and IL-1beta, when incubated with mouse peritoneal cells. Does not display growth-inhibitory activity against the Gram-positive S.epidermidis and Gram-negative E.coli bacteria and against the opportunistic yeast pathogen C.parapsilosis (MIC&gt;128 uM). In addition, it lacks cytotoxic activity against mouse erythrocytes (LC(50)&gt;500 uM) and A549 human non-small cell lung adenocarcinoma cells (LC(50)&gt;100 uM). Moderately stimulates insulin release from rat clonal beta-cells and mouse pancreatic islets. Functionally, non-cytotoxic peptide with immunosuppressive but without insulinotropic effects. Inhibits production of the pro-inflammatory cytokines TNF-alpha, but has no effect on IL-10 and IL-1beta production, when incubated with mouse peritoneal cells. Has no activity of stimulation of insulin release. The protein is Rhinophrynin-33 of Rhinophrynus dorsalis (Mexican burrowing toad).